Consider the following 400-residue polypeptide: Lysophospholipid transporter LplT (400 aa).

The next 12 helical transmembrane spans lie at 19–39 (VIVAQFLSAFGDNALLFATLA), 53–73 (VLQMVFVGAYILFAPFVGQIA), 91–111 (AGAAGICLGINPFVGYTLVGI), 139–159 (MMEASTIAAILLGSVAGGVLA), 164–184 (IAALVACALAYAGAVAANLFI), 195–213 (SWRLSAMTRSFFSACVVLW), 227–247 (LFWGAGVTLRFLLVLWVPVAL), 257–277 (YLNAMVAVGIVVGAGAAAKLV), 281–301 (TVSRCMPAGILIGVVVAIFSL), 304–324 (ALLPAYALLLLIGMLGGFFVV), 352–372 (NSAMLLMLGLYSLAVLVGVPA), and 373–393 (VAIGIGFGVLFALAIAALWIW).

It belongs to the major facilitator superfamily. LplT (TC 2.A.1.42) family.

The protein resides in the cell inner membrane. Functionally, catalyzes the facilitated diffusion of 2-acyl-glycero-3-phosphoethanolamine (2-acyl-GPE) into the cell. This Salmonella paratyphi B (strain ATCC BAA-1250 / SPB7) protein is Lysophospholipid transporter LplT.